Reading from the N-terminus, the 56-residue chain is Large ribosomal subunit protein eL20 (56 aa).

The segment at 1–24 (MSTYTVRGSFPARDGPQQFEKEVE) is disordered.

Belongs to the eukaryotic ribosomal protein eL20 family. As to quaternary structure, part of the 50S ribosomal subunit. Binds 23S rRNA.

The protein is Large ribosomal subunit protein eL20 of Haloarcula marismortui (strain ATCC 43049 / DSM 3752 / JCM 8966 / VKM B-1809) (Halobacterium marismortui).